The primary structure comprises 192 residues: uncharacterized protein (192 aa).

This is an uncharacterized protein from Methanocaldococcus jannaschii (strain ATCC 43067 / DSM 2661 / JAL-1 / JCM 10045 / NBRC 100440) (Methanococcus jannaschii).